We begin with the raw amino-acid sequence, 489 residues long: 5'-AMP-activated protein kinase subunit gamma-3 (489 aa).

Residues 1–95 (MEPELEHTLP…TRQEATFPKA (95 aa)) are disordered. Positions 32-47 (GENSWPSPAVATSSER) are enriched in polar residues. CBS domains follow at residues 197–258 (MATS…RSPL), 280–340 (CFKP…LLPR), and 355–415 (TFRD…HLDM). ADP-binding positions include R225, 240–245 (MLTITD), V285, 306–307 (HR), and K325. AMP-binding positions include R225, 240 to 245 (MLTITD), V285, H306, 306 to 307 (HR), K325, T355, A360, 381 to 382 (SA), 397 to 400 (SRFD), R424, L432, H453, 453 to 454 (HR), and 469 to 472 (SLSD). Residues R225, 240-245 (MLTITD), V285, 306-307 (HR), R307, and K325 contribute to the ATP site. The AMPK pseudosubstrate signature appears at 293–314 (LFEAVYALIKNRIHRLPVLDPV). Residues 397 to 400 (SRFD), R424, L432, and 453 to 454 (HR) contribute to the ADP site. ATP contacts are provided by residues 397–400 (SRFD), R424, L432, and 453–454 (HR). Residues 427–486 (CLEGVLSCQPHESLGEVIDRIAREQVHRLVLVDETQHLLGVVSLSDILQALVLSPAGIDA) form the CBS 4 domain.

Belongs to the 5'-AMP-activated protein kinase gamma subunit family. In terms of assembly, AMPK is a heterotrimer of an alpha catalytic subunit (PRKAA1 or PRKAA2), a beta (PRKAB1 or PRKAB2) and a gamma non-catalytic subunits (PRKAG1, PRKAG2 or PRKAG3). Interacts with FNIP1 and FNIP2. In terms of processing, phosphorylated by ULK1; leading to negatively regulate AMPK activity and suggesting the existence of a regulatory feedback loop between ULK1 and AMPK. Post-translationally, glycosylated; O-GlcNAcylated by OGT, promoting the AMP-activated protein kinase (AMPK) activity.

Its function is as follows. AMP/ATP-binding subunit of AMP-activated protein kinase (AMPK), an energy sensor protein kinase that plays a key role in regulating cellular energy metabolism. In response to reduction of intracellular ATP levels, AMPK activates energy-producing pathways and inhibits energy-consuming processes: inhibits protein, carbohydrate and lipid biosynthesis, as well as cell growth and proliferation. AMPK acts via direct phosphorylation of metabolic enzymes, and by longer-term effects via phosphorylation of transcription regulators. AMPK also acts as a regulator of cellular polarity by remodeling the actin cytoskeleton; probably by indirectly activating myosin. The AMPK gamma3 subunit is a non-catalytic subunit with a regulatory role in muscle energy metabolism. It mediates binding to AMP, ADP and ATP, leading to AMPK activation or inhibition: AMP-binding results in allosteric activation of alpha catalytic subunit (PRKAA1 or PRKAA2) both by inducing phosphorylation and preventing dephosphorylation of catalytic subunits. ADP also stimulates phosphorylation, without stimulating already phosphorylated catalytic subunit. ATP promotes dephosphorylation of catalytic subunit, rendering the AMPK enzyme inactive. The sequence is that of 5'-AMP-activated protein kinase subunit gamma-3 (Prkag3) from Mus musculus (Mouse).